A 1706-amino-acid chain; its full sequence is Histone acetyltransferase HAC12 (1706 aa).

Disordered regions lie at residues 1 to 33 (MNVQ…MQNL), 251 to 284 (TNNN…NSHM), 397 to 456 (VSRV…LGKT), and 524 to 543 (QNSQ…SDSS). Residues 397–406 (VSRVNSSLSH) show a composition bias toward polar residues. Low complexity predominate over residues 407–434 (QQQFQQPPNRFQQQPNQIQQQQQQFLNQ). The TAZ-type 1 zinc finger occupies 637-716 (HDPKFKNQQR…DPRCPVCVPV (80 aa)). A disordered region spans residues 791–909 (TESCKSSIVS…PELTSKSRKP (119 aa)). Over residues 794-805 (CKSSIVSTTEAD) the composition is skewed to polar residues. Basic and acidic residues-rich tracts occupy residues 809–829 (DAER…KVEI) and 870–896 (PKQE…KEEL). The PHD-type zinc finger occupies 998 to 1075 (HYFCIPCYNE…EYTCPYCYVI (78 aa)). Positions 1090 to 1526 (VLGAKDLPRT…VLYHLHNPTA (437 aa)) constitute a CBP/p300-type HAT domain. Acetyl-CoA contacts are provided by residues 1213 to 1215 (LDS), 1232 to 1233 (RT), and Trp1288. 2 ZZ-type zinc fingers span residues 1408 to 1471 (HLQH…IADI) and 1528 to 1581 (AFVT…SLAD). Residues Cys1413, Cys1416, Cys1428, Cys1431, Cys1437, Cys1440, His1453, His1461, Cys1533, Cys1536, Cys1548, Cys1551, Cys1557, Cys1560, His1569, and His1571 each contribute to the Zn(2+) site. The segment at 1588–1671 (EARQLRVLQL…ECDVPRCGDL (84 aa)) adopts a TAZ-type 2 zinc-finger fold.

It localises to the nucleus. The catalysed reaction is L-lysyl-[protein] + acetyl-CoA = N(6)-acetyl-L-lysyl-[protein] + CoA + H(+). Acetyltransferase enzyme. Acetylates histones, giving a specific tag for transcriptional activation. The protein is Histone acetyltransferase HAC12 (HAC12) of Arabidopsis thaliana (Mouse-ear cress).